The chain runs to 669 residues: DNA ligase (669 aa).

NAD(+) is bound by residues 34–38 (DAEYD), 83–84 (SL), and glutamate 114. Catalysis depends on lysine 116, which acts as the N6-AMP-lysine intermediate. NAD(+) is bound by residues arginine 137, glutamate 171, lysine 287, and lysine 311. Positions 405, 408, 423, and 428 each coordinate Zn(2+). Residues 591 to 669 (NVESYFAGKT…EERFLQELNK (79 aa)) form the BRCT domain.

Belongs to the NAD-dependent DNA ligase family. LigA subfamily. Requires Mg(2+) as cofactor. Mn(2+) serves as cofactor.

It carries out the reaction NAD(+) + (deoxyribonucleotide)n-3'-hydroxyl + 5'-phospho-(deoxyribonucleotide)m = (deoxyribonucleotide)n+m + AMP + beta-nicotinamide D-nucleotide.. Its function is as follows. DNA ligase that catalyzes the formation of phosphodiester linkages between 5'-phosphoryl and 3'-hydroxyl groups in double-stranded DNA using NAD as a coenzyme and as the energy source for the reaction. It is essential for DNA replication and repair of damaged DNA. The protein is DNA ligase of Bacillus cereus (strain ATCC 14579 / DSM 31 / CCUG 7414 / JCM 2152 / NBRC 15305 / NCIMB 9373 / NCTC 2599 / NRRL B-3711).